A 131-amino-acid chain; its full sequence is Small ribosomal subunit protein uS8 (131 aa).

It belongs to the universal ribosomal protein uS8 family. As to quaternary structure, part of the 30S ribosomal subunit. Contacts proteins S5 and S12.

Its function is as follows. One of the primary rRNA binding proteins, it binds directly to 16S rRNA central domain where it helps coordinate assembly of the platform of the 30S subunit. This Legionella pneumophila subsp. pneumophila (strain Philadelphia 1 / ATCC 33152 / DSM 7513) protein is Small ribosomal subunit protein uS8.